A 290-amino-acid polypeptide reads, in one-letter code: ATP synthase gamma chain (290 aa).

The protein belongs to the ATPase gamma chain family. F-type ATPases have 2 components, CF(1) - the catalytic core - and CF(0) - the membrane proton channel. CF(1) has five subunits: alpha(3), beta(3), gamma(1), delta(1), epsilon(1). CF(0) has three main subunits: a, b and c.

The protein localises to the cell membrane. Produces ATP from ADP in the presence of a proton gradient across the membrane. The gamma chain is believed to be important in regulating ATPase activity and the flow of protons through the CF(0) complex. This is ATP synthase gamma chain from Wolbachia pipientis subsp. Culex pipiens (strain wPip).